The sequence spans 139 residues: MAKVPRNFKLLEELEKGEKGLGESSCSYGLTNADDITLSDWNATILGPAHSVHENRIYSLKIHCDANYPDAPPIVTFVSRINLPGVDGETGKVNPHKIDCLRHWKREYSMETVLLDLKKEMASSSNRKLPQPPEGSTFF.

One can recognise a UBC core domain in the interval 5–139 (PRNFKLLEEL…PQPPEGSTFF (135 aa)).

It belongs to the ubiquitin-conjugating enzyme family. In terms of assembly, heterodimer with ubc13.

In terms of biological role, has a role in the DNA error-free postreplication repair (PRR) pathway. Lacks catalytic activity by itself. The ubc13/spm2 heterodimer catalyzes the synthesis of non-canonical poly-ubiquitin chains that are linked through 'Lys-63'. In Schizosaccharomyces pombe (strain 972 / ATCC 24843) (Fission yeast), this protein is Ubiquitin-conjugating enzyme spm2 (spm2).